A 507-amino-acid chain; its full sequence is E3 ubiquitin-protein ligase TRIM31 (507 aa).

The RING-type zinc finger occupies 16–56 (CPICMEILQDPVTIDCGHNFCLQCISQVGKTSEKIQCPLCK). Residues 89-130 (KEDSRCQRHKEKLHYFCEQDGAFLCVVCRDSKDHKSHNVTLI) form a B box-type zinc finger. Positions 94, 97, 116, and 122 each coordinate Zn(2+). 2 coiled-coil regions span residues 176-241 (EKLK…LQSS) and 269-298 (EDLE…DMNA). One can recognise a B30.2/SPRY domain in the interval 315–507 (EKESWSLLQK…VACSHITLSP (193 aa)).

Belongs to the TRIM/RBCC family. May form oligomers. Interacts with isoform p52shc of SHC1. Auto-ubiquitinated (in vitro). In terms of tissue distribution, highly expressed in the gastrointestrinal tract, with high expression in the small intestine, moderate in the large intestine and weak in the stomach and esophagus.

Its subcellular location is the cytoplasm. The protein resides in the mitochondrion. It carries out the reaction S-ubiquitinyl-[E2 ubiquitin-conjugating enzyme]-L-cysteine + [acceptor protein]-L-lysine = [E2 ubiquitin-conjugating enzyme]-L-cysteine + N(6)-ubiquitinyl-[acceptor protein]-L-lysine.. Its pathway is protein modification; protein ubiquitination. Functionally, E3 ubiquitin-protein ligase that acts as a regulator of antiviral immune response and inflammation by mediating ubiquitination of substrates. Acts as a regulator of innate immune defense against viruses by mediating 'Lys-63'-linked ubiquitination of MAVS, promoting MAVS polymerization and formation of three-stranded helical filaments on mitochondria. Acts as a negative regulator of the NLRP3 inflammasome by catalyzing 'Lys-48'-linked ubiquitination of NLRP3, leading to its degradation. Regulator of Src-induced anchorage independent cell growth. The chain is E3 ubiquitin-protein ligase TRIM31 from Mus musculus (Mouse).